The sequence spans 451 residues: POU domain, class 3, transcription factor 1 (451 aa).

5 disordered regions span residues 1–21, 69–114, 134–154, 186–253, and 395–451; these read MATTAQYLPRGPGGGAGGTGP, AHPQ…GFHA, AHHLGPAMSPSPGAGGGHQPQ, GLHH…PSSD, and KRMT…GSVQ. Gly residues-rich tracts occupy residues 11–20, 76–85, and 95–112; these read GPGGGAGGTG, TGGGGGGDWA, and AGGGSTGRADDGGGGGGF. Residues 134-145 are compositionally biased toward low complexity; it reads AHHLGPAMSPSP. Positions 190–199 are enriched in basic and acidic residues; the sequence is ALHEDGHEAQ. Low complexity predominate over residues 220–232; sequence AGGLHAAAAHLHP. One can recognise a POU-specific domain in the interval 247–321; that stretch reads EDAPSSDDLE…LLNKWLEETD (75 aa). The segment at residues 339–398 is a DNA-binding region (homeobox); the sequence is KRKKRTSIEVGVKGALESHFLKCPKPSAHEITGLADSLQLEKEVVRVWFCNRRQKEKRMT. Residues 427 to 436 are compositionally biased toward pro residues; that stretch reads PSAPPPPPPA.

The protein belongs to the POU transcription factor family. Class-3 subfamily. As to expression, neural tissues and testis.

The protein localises to the nucleus. Transcription factor that binds to the octamer motif (5'-ATTTGCAT-3'). Acts as a transcriptional activator when binding cooperatively with SOX4, SOX11, or SOX12 to gene promoters. Acts as a transcriptional repressor of myelin-specific genes. The chain is POU domain, class 3, transcription factor 1 (Pou3f1) from Rattus norvegicus (Rat).